The following is a 466-amino-acid chain: Uronate isomerase (466 aa).

The protein belongs to the metallo-dependent hydrolases superfamily. Uronate isomerase family.

The catalysed reaction is D-glucuronate = D-fructuronate. It carries out the reaction aldehydo-D-galacturonate = keto-D-tagaturonate. Its pathway is carbohydrate metabolism; pentose and glucuronate interconversion. In Streptococcus agalactiae serotype III (strain NEM316), this protein is Uronate isomerase.